The sequence spans 1033 residues: Integrin alpha-IIb (1033 aa).

Positions 1 to 31 (MARASCAWHSLWLLQWTPLFLGPSAVPPVWA) are cleaved as a signal peptide. Residues 32 to 988 (LNLDSEKFSV…TQLLRALEER (957 aa)) are Extracellular-facing. FG-GAP repeat units lie at residues 35-96 (DSEK…GGKC), 109-173 (NLGF…GRAE), 184-237 (SVYA…ISSY), 252-304 (TYDN…DSYY), 305-370 (QPLH…PQAL), 372-431 (TPTL…GLSP), and 434-495 (SQVL…VQDS). Residues asparagine 46 and asparagine 75 are each glycosylated (N-linked (GlcNAc...) asparagine). Intrachain disulfides connect cysteine 87–cysteine 96, cysteine 138–cysteine 161, and cysteine 177–cysteine 197. Positions 273, 275, 277, 280, 282, 327, 329, 331, 333, 335, 395, 399, 401, 403, 456, 458, 460, 462, and 464 each coordinate Ca(2+). Disulfide bonds link cysteine 503-cysteine 514 and cysteine 520-cysteine 575. N-linked (GlcNAc...) asparagine glycosylation is present at asparagine 600. 4 disulfides stabilise this stretch: cysteine 632–cysteine 638, cysteine 704–cysteine 717, cysteine 856–cysteine 916, and cysteine 905–cysteine 911. Asparagine 710 is a glycosylation site (N-linked (GlcNAc...) asparagine). Residue asparagine 957 is glycosylated (N-linked (GlcNAc...) asparagine). A helical membrane pass occupies residues 989-1014 (AIPVWWVLVGVLGGLLLLTLLVLAMW). Residues 1015–1033 (KAGFFKRNRPPLEEDEEEE) lie on the Cytoplasmic side of the membrane. Positions 1017–1021 (GFFKR) match the GFFKR motif motif.

It belongs to the integrin alpha chain family. As to quaternary structure, heterodimer of an alpha and a beta subunit. The alpha subunit is composed of a heavy and a light chain linked by a disulfide bond. Alpha-IIb associates with beta-3. Directly interacts with RNF181. Interacts (via C-terminus cytoplasmic tail region) with CIB1; the interaction is direct and calcium-dependent. Interacts (via C-terminus cytoplasmic tail region) with CIB2, CIB3 and CIB4; the interactions are stabilized/increased in a calcium and magnesium-dependent manner. ITGA2B:ITGB3 interacts with PPIA/CYPA; the interaction is ROS and PPIase activity-dependent and is increased in the presence of thrombin. ITGA2B:ITGB3 interacts with SELP (via C-type lectin domain); the interaction mediates cell-cell interaction and adhesion. In terms of processing, cleaved by ELANE; the cleavage promotes activation of platelet fibrinogen receptor integrin alpha-IIb/beta-3.

The protein resides in the membrane. Functionally, integrin alpha-IIb/beta-3 is a receptor for fibronectin, fibrinogen, plasminogen, prothrombin, thrombospondin and vitronectin. It recognizes the sequence R-G-D in a wide array of ligands. It recognizes the sequence H-H-L-G-G-G-A-K-Q-A-G-D-V in fibrinogen gamma chain. Following activation integrin alpha-IIb/beta-3 brings about platelet/platelet interaction through binding of soluble fibrinogen. This step leads to rapid platelet aggregation which physically plugs ruptured endothelial cell surface. This chain is Integrin alpha-IIb (Itga2b), found in Mus musculus (Mouse).